The sequence spans 658 residues: Threonine--tRNA ligase (658 aa).

The TGS domain occupies 1-64; sequence MSCSVSLSFP…GQSGQIEIIT (64 aa). A catalytic region spans residues 246–549; that stretch reads DHRRLGREMD…LIENFAGHMP (304 aa). 3 residues coordinate Zn(2+): Cys343, His394, and His526.

The protein belongs to the class-II aminoacyl-tRNA synthetase family. As to quaternary structure, homodimer. It depends on Zn(2+) as a cofactor.

It is found in the cytoplasm. It carries out the reaction tRNA(Thr) + L-threonine + ATP = L-threonyl-tRNA(Thr) + AMP + diphosphate + H(+). Functionally, catalyzes the attachment of threonine to tRNA(Thr) in a two-step reaction: L-threonine is first activated by ATP to form Thr-AMP and then transferred to the acceptor end of tRNA(Thr). Also edits incorrectly charged L-seryl-tRNA(Thr). This Bartonella quintana (strain Toulouse) (Rochalimaea quintana) protein is Threonine--tRNA ligase.